The sequence spans 135 residues: Small ribosomal subunit protein eS6 (135 aa).

It belongs to the eukaryotic ribosomal protein eS6 family.

In Halorubrum lacusprofundi (strain ATCC 49239 / DSM 5036 / JCM 8891 / ACAM 34), this protein is Small ribosomal subunit protein eS6.